The chain runs to 1378 residues: DNA-directed RNA polymerase subunit beta (1378 aa).

This sequence belongs to the RNA polymerase beta chain family. As to quaternary structure, the RNAP catalytic core consists of 2 alpha, 1 beta, 1 beta' and 1 omega subunit. When a sigma factor is associated with the core the holoenzyme is formed, which can initiate transcription.

The enzyme catalyses RNA(n) + a ribonucleoside 5'-triphosphate = RNA(n+1) + diphosphate. Its function is as follows. DNA-dependent RNA polymerase catalyzes the transcription of DNA into RNA using the four ribonucleoside triphosphates as substrates. This Roseobacter denitrificans (strain ATCC 33942 / OCh 114) (Erythrobacter sp. (strain OCh 114)) protein is DNA-directed RNA polymerase subunit beta.